A 214-amino-acid chain; its full sequence is Peptide methionine sulfoxide reductase B1, chloroplastic (214 aa).

The N-terminal 53 residues, 1–53, are a transit peptide targeting the chloroplast; the sequence is MAMRQYAAATAASSSFRARPRARPSCLPAAALPLAPCCGVAWSRASYRRASVR. A compositionally biased stretch (low complexity) spans 58–81; sequence ASSSSSSSSSSPSPQGQAQAQAQG. The disordered stretch occupies residues 58-91; that stretch reads ASSSSSSSSSSPSPQGQAQAQAQGKPNYSTSLTD. A MsrB domain is found at 91 to 213; it reads DEEWRKRLTK…NSASLKLKKT (123 aa). Residues Cys130, Cys133, Cys179, and Cys182 each contribute to the Zn(2+) site. Cys202 serves as the catalytic Nucleophile.

Belongs to the MsrB Met sulfoxide reductase family. Zn(2+) serves as cofactor. As to expression, expressed in leaves and flowers.

Its subcellular location is the plastid. It localises to the chloroplast. It catalyses the reaction L-methionyl-[protein] + [thioredoxin]-disulfide + H2O = L-methionyl-(R)-S-oxide-[protein] + [thioredoxin]-dithiol. Catalyzes the reduction of methionine sulfoxide (MetSO) to methionine in proteins. Involved in abiotic stress response. Plays a protective role against oxidative stress by restoring activity to proteins that have been inactivated by methionine oxidation. MSRB family specifically reduces the MetSO R-enantiomer. The protein is Peptide methionine sulfoxide reductase B1, chloroplastic of Oryza sativa subsp. japonica (Rice).